Here is a 343-residue protein sequence, read N- to C-terminus: UDP-3-O-acylglucosamine N-acyltransferase 2 (343 aa).

H251 serves as the catalytic Proton acceptor.

The protein belongs to the transferase hexapeptide repeat family. LpxD subfamily. In terms of assembly, homotrimer.

The enzyme catalyses a UDP-3-O-[(3R)-3-hydroxyacyl]-alpha-D-glucosamine + a (3R)-hydroxyacyl-[ACP] = a UDP-2-N,3-O-bis[(3R)-3-hydroxyacyl]-alpha-D-glucosamine + holo-[ACP] + H(+). Its pathway is bacterial outer membrane biogenesis; LPS lipid A biosynthesis. Catalyzes the N-acylation of UDP-3-O-acylglucosamine using 3-hydroxyacyl-ACP as the acyl donor. Is involved in the biosynthesis of lipid A, a phosphorylated glycolipid that anchors the lipopolysaccharide to the outer membrane of the cell. The polypeptide is UDP-3-O-acylglucosamine N-acyltransferase 2 (Legionella pneumophila (strain Paris)).